The following is a 355-amino-acid chain: Protein MxiC (355 aa).

The protein localises to the secreted. It is found in the host cell. Necessary for the secretion of IPA invasins. This Shigella flexneri protein is Protein MxiC (mxiC).